The sequence spans 316 residues: Acetyl-coenzyme A carboxylase carboxyl transferase subunit alpha (316 aa).

Residues 39–293 (RLQDKSHALT…RQTLLAQLES (255 aa)) enclose the CoA carboxyltransferase C-terminal domain.

It belongs to the AccA family. Acetyl-CoA carboxylase is a heterohexamer composed of biotin carboxyl carrier protein (AccB), biotin carboxylase (AccC) and two subunits each of ACCase subunit alpha (AccA) and ACCase subunit beta (AccD).

The protein localises to the cytoplasm. The catalysed reaction is N(6)-carboxybiotinyl-L-lysyl-[protein] + acetyl-CoA = N(6)-biotinyl-L-lysyl-[protein] + malonyl-CoA. Its pathway is lipid metabolism; malonyl-CoA biosynthesis; malonyl-CoA from acetyl-CoA: step 1/1. Its function is as follows. Component of the acetyl coenzyme A carboxylase (ACC) complex. First, biotin carboxylase catalyzes the carboxylation of biotin on its carrier protein (BCCP) and then the CO(2) group is transferred by the carboxyltransferase to acetyl-CoA to form malonyl-CoA. This is Acetyl-coenzyme A carboxylase carboxyl transferase subunit alpha from Azotobacter vinelandii (strain DJ / ATCC BAA-1303).